The chain runs to 122 residues: Large ribosomal subunit protein bL17 (122 aa).

It belongs to the bacterial ribosomal protein bL17 family. As to quaternary structure, part of the 50S ribosomal subunit. Contacts protein L32.

In Staphylococcus carnosus (strain TM300), this protein is Large ribosomal subunit protein bL17.